A 619-amino-acid polypeptide reads, in one-letter code: Translation initiation factor eIF2B subunit delta (619 aa).

Over residues 21-32 the composition is skewed to basic and acidic residues; that stretch reads GDYLDSKQEGKP. Positions 21 to 251 are disordered; sequence GDYLDSKQEG…PKQRGKITKK (231 aa). The segment covering 42–56 has biased composition (low complexity); sequence TNTSPVSIPTIISPP. Polar residues predominate over residues 57 to 84; the sequence is LGSNNSNYGKSPKSSYDNKQTSPLLSAS. The segment covering 85 to 98 has biased composition (low complexity); the sequence is NNRKNNNNNNNNNN. The span at 99–125 shows a compositional bias: polar residues; that stretch reads ATSPKDSSIIGKNNVNSDLSKVSSSLN. Residues 136-199 show a composition bias toward low complexity; that stretch reads STSSTPTSTP…KQQSKQQATQ (64 aa). A compositionally biased stretch (basic and acidic residues) spans 200–244; sequence QDKKDKEQQQQQQDKQDKESNEIKGSKEVAKDGQHGVKQFDDPKQ.

This sequence belongs to the eIF-2B alpha/beta/delta subunits family. Component of the translation initiation factor 2B (eIF2B) complex which is a heterodecamer of two sets of five different subunits: alpha, beta, gamma, delta and epsilon. Subunits alpha, beta and delta comprise a regulatory subcomplex and subunits epsilon and gamma comprise a catalytic subcomplex. Within the complex, the hexameric regulatory complex resides at the center, with the two heterodimeric catalytic subcomplexes bound on opposite sides.

It localises to the cytoplasm. The protein localises to the cytosol. Acts as a component of the translation initiation factor 2B (eIF2B) complex, which catalyzes the exchange of GDP for GTP on eukaryotic initiation factor 2 (eIF2) gamma subunit. Its guanine nucleotide exchange factor activity is repressed when bound to eIF2 complex phosphorylated on the alpha subunit, thereby limiting the amount of methionyl-initiator methionine tRNA available to the ribosome and consequently global translation is repressed. In Dictyostelium discoideum (Social amoeba), this protein is Translation initiation factor eIF2B subunit delta (eif2b4).